The primary structure comprises 399 residues: Tyrosine--tRNA ligase 2 (399 aa).

The 'HIGH' region signature appears at P42–H51. The 'KMSKS' region motif lies at K226 to S230. K229 lines the ATP pocket. The 61-residue stretch at M336 to L396 folds into the S4 RNA-binding domain.

Belongs to the class-I aminoacyl-tRNA synthetase family. TyrS type 2 subfamily. As to quaternary structure, homodimer.

It is found in the cytoplasm. The catalysed reaction is tRNA(Tyr) + L-tyrosine + ATP = L-tyrosyl-tRNA(Tyr) + AMP + diphosphate + H(+). Functionally, catalyzes the attachment of tyrosine to tRNA(Tyr) in a two-step reaction: tyrosine is first activated by ATP to form Tyr-AMP and then transferred to the acceptor end of tRNA(Tyr). This Pseudomonas aeruginosa (strain ATCC 15692 / DSM 22644 / CIP 104116 / JCM 14847 / LMG 12228 / 1C / PRS 101 / PAO1) protein is Tyrosine--tRNA ligase 2.